We begin with the raw amino-acid sequence, 133 residues long: FK506-binding protein 2 (133 aa).

The N-terminal stretch at 1 to 20 (MKLLYCLLLVILALVGLSSG) is a signal peptide. The region spanning 45–133 (GDKLKIHYTG…IFDVELIGIN (89 aa)) is the PPIase FKBP-type domain.

This sequence belongs to the FKBP-type PPIase family.

The catalysed reaction is [protein]-peptidylproline (omega=180) = [protein]-peptidylproline (omega=0). With respect to regulation, inhibited by both FK506 and rapamycin. Its function is as follows. PPIases accelerate the folding of proteins by catalyzing the cis-trans isomerization of proline imidic peptide bonds in oligopeptides. The chain is FK506-binding protein 2 (fkbp2) from Dictyostelium discoideum (Social amoeba).